We begin with the raw amino-acid sequence, 227 residues long: Cytochrome c oxidase subunit 2 (227 aa).

At 1–14 the chain is on the mitochondrial intermembrane side; sequence MAYPHQLGFQDATS. A helical transmembrane segment spans residues 15–45; that stretch reads PIMEELLSFHDHTLMIVFLISSLVLYLISLM. Over 46 to 59 the chain is Mitochondrial matrix; that stretch reads LTTKLTHTSTMDAQ. The chain crosses the membrane as a helical span at residues 60–87; that stretch reads EVETVWTILPAIILIMIALPSLRILYMM. The Mitochondrial intermembrane segment spans residues 88–227; that stretch reads DEINNPLLTV…SFENWTTSMT (140 aa). Residues histidine 161, cysteine 196, glutamate 198, cysteine 200, histidine 204, and methionine 207 each coordinate Cu cation. Residue glutamate 198 participates in Mg(2+) binding.

This sequence belongs to the cytochrome c oxidase subunit 2 family. In terms of assembly, component of the cytochrome c oxidase (complex IV, CIV), a multisubunit enzyme composed of 14 subunits. The complex is composed of a catalytic core of 3 subunits MT-CO1, MT-CO2 and MT-CO3, encoded in the mitochondrial DNA, and 11 supernumerary subunits COX4I, COX5A, COX5B, COX6A, COX6B, COX6C, COX7A, COX7B, COX7C, COX8 and NDUFA4, which are encoded in the nuclear genome. The complex exists as a monomer or a dimer and forms supercomplexes (SCs) in the inner mitochondrial membrane with NADH-ubiquinone oxidoreductase (complex I, CI) and ubiquinol-cytochrome c oxidoreductase (cytochrome b-c1 complex, complex III, CIII), resulting in different assemblies (supercomplex SCI(1)III(2)IV(1) and megacomplex MCI(2)III(2)IV(2)). Found in a complex with TMEM177, COA6, COX18, COX20, SCO1 and SCO2. Interacts with TMEM177 in a COX20-dependent manner. Interacts with COX20. Interacts with COX16. Cu cation serves as cofactor.

The protein resides in the mitochondrion inner membrane. It carries out the reaction 4 Fe(II)-[cytochrome c] + O2 + 8 H(+)(in) = 4 Fe(III)-[cytochrome c] + 2 H2O + 4 H(+)(out). Functionally, component of the cytochrome c oxidase, the last enzyme in the mitochondrial electron transport chain which drives oxidative phosphorylation. The respiratory chain contains 3 multisubunit complexes succinate dehydrogenase (complex II, CII), ubiquinol-cytochrome c oxidoreductase (cytochrome b-c1 complex, complex III, CIII) and cytochrome c oxidase (complex IV, CIV), that cooperate to transfer electrons derived from NADH and succinate to molecular oxygen, creating an electrochemical gradient over the inner membrane that drives transmembrane transport and the ATP synthase. Cytochrome c oxidase is the component of the respiratory chain that catalyzes the reduction of oxygen to water. Electrons originating from reduced cytochrome c in the intermembrane space (IMS) are transferred via the dinuclear copper A center (CU(A)) of subunit 2 and heme A of subunit 1 to the active site in subunit 1, a binuclear center (BNC) formed by heme A3 and copper B (CU(B)). The BNC reduces molecular oxygen to 2 water molecules using 4 electrons from cytochrome c in the IMS and 4 protons from the mitochondrial matrix. The polypeptide is Cytochrome c oxidase subunit 2 (MT-CO2) (Georychus capensis (Cape mole rat)).